Reading from the N-terminus, the 829-residue chain is Protein SEY1 (829 aa).

Over 1-721 (MNQTPQIAQD…KRSMVSSVAQ (721 aa)) the chain is Cytoplasmic. The GB1/RHD3-type G domain maps to 87-310 (GFAYDVVAVF…REDYVFQPAY (224 aa)). 97–104 (GSQSTGKS) serves as a coordination point for GTP. A coiled-coil region spans residues 487-525 (EYEHELALLDEDLKLIADKCRADETKKMVNAIERNVKRQ). Residues 722–742 (IPVWMYGVLVVLGWNEAMAVL) traverse the membrane as a helical segment. At 743-745 (FNP) the chain is on the lumenal side. A helical membrane pass occupies residues 746–766 (LYFAMLLVLAASGYIILQLGL). The Cytoplasmic portion of the chain corresponds to 767–829 (AGPILQIAST…DLIKGEMLEK (63 aa)). A disordered region spans residues 806-829 (PVTASSSDEQERKGDLIKGEMLEK). Residues 814 to 829 (EQERKGDLIKGEMLEK) are compositionally biased toward basic and acidic residues.

The protein belongs to the TRAFAC class dynamin-like GTPase superfamily. GB1/RHD3 GTPase family. RHD3 subfamily.

The protein localises to the endoplasmic reticulum membrane. In terms of biological role, cooperates with the reticulon proteins and tubule-shaping DP1 family proteins to generate and maintain the structure of the tubular endoplasmic reticulum network. Has GTPase activity, which is required for its function in ER organization. This Cryptococcus neoformans var. neoformans serotype D (strain B-3501A) (Filobasidiella neoformans) protein is Protein SEY1.